The primary structure comprises 408 residues: tRNA-specific 2-thiouridylase MnmA (408 aa).

ATP is bound by residues 27–34 and Leu53; that span reads AMSGGVDS. Catalysis depends on Cys121, which acts as the Nucleophile. Cys121 and Cys222 are joined by a disulfide. Gly145 lines the ATP pocket. The interval 172–174 is interaction with tRNA; sequence RDQ. Catalysis depends on Cys222, which acts as the Cysteine persulfide intermediate.

It belongs to the MnmA/TRMU family.

The protein localises to the cytoplasm. It carries out the reaction S-sulfanyl-L-cysteinyl-[protein] + uridine(34) in tRNA + AH2 + ATP = 2-thiouridine(34) in tRNA + L-cysteinyl-[protein] + A + AMP + diphosphate + H(+). Its function is as follows. Catalyzes the 2-thiolation of uridine at the wobble position (U34) of tRNA, leading to the formation of s(2)U34. The chain is tRNA-specific 2-thiouridylase MnmA from Rhizobium etli (strain ATCC 51251 / DSM 11541 / JCM 21823 / NBRC 15573 / CFN 42).